We begin with the raw amino-acid sequence, 682 residues long: MSFQNSLSLSLVNPTHALCMVGMEITLDISKCAPDKCKSFTIRGSPRILIHISSSVIAGKEDTVVWRSMNHPTVALVRMVAPSPTVDEDKVLVSYFCPDQEVPTATAVLFLTGIEISLEADIYRDGQLDMPSDKQAKKKWMWGMNGWGAILLVNCSPNAVGQPDEQSFQEGPREIQNLSQMNVTVEGPTSILQNYQLILHTSEEEAKKTRVYWSQRGSSAYELVVGPNKPVYLLPTFENRRKEAFYVEATEFPSPSFSGLISLSLSLVEKAHDECIPEIPLYKDTVMFRVAPYIFMPSTQMPLEVYLCRELQLQGFVDSVTKLSEKSKVQVVKVYEDPNRQSKWLQDEMAFCYTQAPHKTVSLILDTPRVSKLEDFPMKYTLTPGSGYLIRQTEDHRVASLDSIGNLMVSPPVKAQGKDYPLGRVLIGGSFYPSSEGRDMNKGLREFVYAQQVQAPVELFSDWLMTGHMDQFMCFVPTNDKNNDQKDFRLLLASPSACFELFEQKQKEGYGNVTLFEDIGAEQLLSNGRESKTISQILADKSFREQNTYVEKCISLNRTLLKTELGLEDKDIILIPQLFCLEQLTNVPSNQQSTKLFARPYFPDMLQIIVLGKNLGIPKPFGPKINGTCCLEEKVCGLLEPLGLKCTFIDDFDCYLANIGDVCASAIINRVPFAFKWWKMTP.

Residues Ser-2 and Ser-434 each carry the phosphoserine modification.

The protein belongs to the protein arginine deiminase family. In terms of assembly, homodimers. Associates with alpha-tubulin. In terms of processing, phosphorylation at Ser-2, possibly by RSK-type kinases, and Ser-434 creates binding sites for 14-3-3 proteins. In terms of tissue distribution, expressed at very high levels in oocytes. Weakly expressed in testis. Expressed in primordial, primary, secondary and Graafian follicles, and in immature oocytes, mature eggs and blastocyst (at protein level).

Its subcellular location is the cytoplasm. The protein localises to the nucleus. It is found in the cytoplasmic vesicle. It localises to the secretory vesicle. The protein resides in the cortical granule. In terms of biological role, structural constituent of cytoplasmic lattices, which plays a key role in early embryonic development. Cytoplasmic lattices consist in fibrous structures found in the cytoplasm of oocytes and preimplantation embryos. They are required to store maternal proteins critical for embryonic development, such as ribosomal proteins and proteins that control epigenetic reprogramming of the preimplantation embryo, and prevent their degradation or activation. In contrast to other members of the family, does not show protein-arginine deiminase activity due to its inability to bind Ca(2+). The polypeptide is Inactive protein-arginine deiminase type-6 (Mus musculus (Mouse)).